The chain runs to 916 residues: Protein O-GlcNAcase (916 aa).

The interval 1 to 46 is disordered; the sequence is MVQKESQAALEERESERNANPAAASGASLEQSVAPAPGEDNPSGAG. One can recognise a GH84 domain in the interval 60–336; it reads FLCGVVEGFY…TLATWYKSNM (277 aa). Residues Gly-67, Lys-98, and Asp-174 each coordinate a protein. Asp-175 serves as the catalytic Proton donor. A protein is bound by residues Tyr-219, 278-280, Asp-285, and Asn-313; that span reads WDN. Residue Ser-364 is modified to Phosphoserine. The segment at 443–465 is disordered; that stretch reads ALSGEPSVLTKEEEKKQPDEEPM. Basic and acidic residues predominate over residues 452–461; that stretch reads TKEEEKKQPD.

Belongs to the glycosyl hydrolase 84 family. In terms of assembly, monomer. Interacts with CLOCK. Proteolytically cleaved by caspase-3 during apoptosis. The fragments interact with each other; cleavage does not decrease enzyme activity.

It is found in the cytoplasm. The protein resides in the nucleus. The catalysed reaction is 3-O-(N-acetyl-beta-D-glucosaminyl)-L-seryl-[protein] + H2O = N-acetyl-D-glucosamine + L-seryl-[protein]. The enzyme catalyses 3-O-(N-acetyl-beta-D-glucosaminyl)-L-threonyl-[protein] + H2O = L-threonyl-[protein] + N-acetyl-D-glucosamine. Its function is as follows. Cleaves GlcNAc but not GalNAc from O-glycosylated proteins. Deglycosylates a large and diverse number of proteins, such as CRYAB, ELK1, GSDMD, LMNB1 and TAB1. Can use p-nitrophenyl-beta-GlcNAc and 4-methylumbelliferone-GlcNAc as substrates but not p-nitrophenyl-beta-GalNAc or p-nitrophenyl-alpha-GlcNAc (in vitro). Does not bind acetyl-CoA and does not have histone acetyltransferase activity. This chain is Protein O-GlcNAcase, found in Mus musculus (Mouse).